Reading from the N-terminus, the 181-residue chain is Probable cobalt-precorrin-6B C(15)-methyltransferase (decarboxylating) (181 aa).

S-adenosyl-L-methionine-binding positions include Thr-16, 40 to 44 (GCGSG), Asp-61, and Ala-89.

This sequence belongs to the methyltransferase superfamily. Archaeal-type CbiT family.

The enzyme catalyses Co-precorrin-6B + S-adenosyl-L-methionine = Co-precorrin-7 + S-adenosyl-L-homocysteine + CO2. The protein operates within cofactor biosynthesis; adenosylcobalamin biosynthesis; cob(II)yrinate a,c-diamide from sirohydrochlorin (anaerobic route): step 8/10. Catalyzes the methylation of C-15 in cobalt-precorrin-6B followed by the decarboxylation of C-12 to form cobalt-precorrin-7. The chain is Probable cobalt-precorrin-6B C(15)-methyltransferase (decarboxylating) from Methanococcus maripaludis (strain C6 / ATCC BAA-1332).